We begin with the raw amino-acid sequence, 403 residues long: Alkaline protease 1 (403 aa).

Residues 1 to 21 (MLSIKRTLLLLGAVLPAVFGA) form the signal peptide. The propeptide occupies 22-125 (PVQETRRAAQ…QIWYIDALTT (104 aa)). One can recognise an Inhibitor I9 domain in the interval 36-120 (KYIVTFKPGT…HVEEDQIWYI (85 aa)). The Peptidase S8 domain occupies 130-403 (PWGLGSISHK…PNKLAYNGNA (274 aa)). Active-site charge relay system residues include Asp162 and His193. N-linked (GlcNAc...) asparagine glycosylation is found at Asn253 and Asn307. The active-site Charge relay system is Ser349.

It belongs to the peptidase S8 family.

It is found in the secreted. It catalyses the reaction Hydrolysis of proteins with broad specificity, and of Bz-Arg-OEt &gt; Ac-Tyr-OEt. Does not hydrolyze peptide amides.. Functionally, secreted alkaline protease that allows assimilation of proteinaceous substrates. This chain is Alkaline protease 1 (alp1), found in Neosartorya fischeri (strain ATCC 1020 / DSM 3700 / CBS 544.65 / FGSC A1164 / JCM 1740 / NRRL 181 / WB 181) (Aspergillus fischerianus).